A 332-amino-acid polypeptide reads, in one-letter code: Succinylglutamate desuccinylase (332 aa).

3 residues coordinate Zn(2+): His-59, Glu-62, and His-151. Residue Glu-215 is part of the active site.

This sequence belongs to the AspA/AstE family. Succinylglutamate desuccinylase subfamily. The cofactor is Zn(2+).

It catalyses the reaction N-succinyl-L-glutamate + H2O = L-glutamate + succinate. The protein operates within amino-acid degradation; L-arginine degradation via AST pathway; L-glutamate and succinate from L-arginine: step 5/5. Transforms N(2)-succinylglutamate into succinate and glutamate. The chain is Succinylglutamate desuccinylase from Pseudomonas aeruginosa (strain UCBPP-PA14).